Here is a 311-residue protein sequence, read N- to C-terminus: Aspartate carbamoyltransferase catalytic subunit (311 aa).

Carbamoyl phosphate is bound by residues R58 and T59. K86 contributes to the L-aspartate binding site. R108, H136, and Q139 together coordinate carbamoyl phosphate. 2 residues coordinate L-aspartate: R169 and R223. Residues G264 and P265 each contribute to the carbamoyl phosphate site.

Belongs to the aspartate/ornithine carbamoyltransferase superfamily. ATCase family. In terms of assembly, heterododecamer (2C3:3R2) of six catalytic PyrB chains organized as two trimers (C3), and six regulatory PyrI chains organized as three dimers (R2).

It carries out the reaction carbamoyl phosphate + L-aspartate = N-carbamoyl-L-aspartate + phosphate + H(+). The protein operates within pyrimidine metabolism; UMP biosynthesis via de novo pathway; (S)-dihydroorotate from bicarbonate: step 2/3. In terms of biological role, catalyzes the condensation of carbamoyl phosphate and aspartate to form carbamoyl aspartate and inorganic phosphate, the committed step in the de novo pyrimidine nucleotide biosynthesis pathway. This Desulfosudis oleivorans (strain DSM 6200 / JCM 39069 / Hxd3) (Desulfococcus oleovorans) protein is Aspartate carbamoyltransferase catalytic subunit.